The following is a 96-amino-acid chain: Small ribosomal subunit protein bS6 (96 aa).

Belongs to the bacterial ribosomal protein bS6 family.

Its function is as follows. Binds together with bS18 to 16S ribosomal RNA. In Corynebacterium aurimucosum (strain ATCC 700975 / DSM 44827 / CIP 107346 / CN-1) (Corynebacterium nigricans), this protein is Small ribosomal subunit protein bS6.